A 222-amino-acid polypeptide reads, in one-letter code: Capsular polysaccharide type 5 biosynthesis protein cap5A (222 aa).

Transmembrane regions (helical) follow at residues 20–40 (ILII…FFVL) and 172–192 (VVNL…YIFF).

This sequence belongs to the CpsC/CapA family.

It localises to the cell membrane. Functionally, required for the biosynthesis of type 5 capsular polysaccharide (Cap5/CP5). Might act as the chain-length regulator. The sequence is that of Capsular polysaccharide type 5 biosynthesis protein cap5A (cap5A) from Staphylococcus aureus (strain Newman).